A 554-amino-acid chain; its full sequence is Glucose-6-phosphate isomerase (554 aa).

Catalysis depends on Glu359, which acts as the Proton donor. Residues His390 and Lys518 contribute to the active site.

Belongs to the GPI family.

It localises to the cytoplasm. It catalyses the reaction alpha-D-glucose 6-phosphate = beta-D-fructose 6-phosphate. It participates in carbohydrate biosynthesis; gluconeogenesis. The protein operates within carbohydrate degradation; glycolysis; D-glyceraldehyde 3-phosphate and glycerone phosphate from D-glucose: step 2/4. Catalyzes the reversible isomerization of glucose-6-phosphate to fructose-6-phosphate. The protein is Glucose-6-phosphate isomerase of Ectopseudomonas mendocina (strain ymp) (Pseudomonas mendocina).